Consider the following 226-residue polypeptide: Urease accessory protein UreF (226 aa).

It belongs to the UreF family. In terms of assembly, ureD, UreF and UreG form a complex that acts as a GTP-hydrolysis-dependent molecular chaperone, activating the urease apoprotein by helping to assemble the nickel containing metallocenter of UreC. The UreE protein probably delivers the nickel.

The protein localises to the cytoplasm. In terms of biological role, required for maturation of urease via the functional incorporation of the urease nickel metallocenter. The polypeptide is Urease accessory protein UreF (Burkholderia multivorans (strain ATCC 17616 / 249)).